Here is a 120-residue protein sequence, read N- to C-terminus: UPF0102 protein TW312 (120 aa).

This sequence belongs to the UPF0102 family.

This is UPF0102 protein TW312 from Tropheryma whipplei (strain TW08/27) (Whipple's bacillus).